A 177-amino-acid chain; its full sequence is MGASREKKQQIVAEFKDKLSKAQTVIFTSFSGLTVEDETVLRRKFKEANSEYKVYKNTLMTIAARELGYGDDLIKYFEGPTSVAFGYEDPVAPAKILTEFMKDHKGLELKVGIVNGKIVSPQEIEALAKLPSREELLAKALGSMKAPITNLVFVLSGTLRSLVYALNAIKEKKQAEA.

Belongs to the universal ribosomal protein uL10 family. In terms of assembly, part of the ribosomal stalk of the 50S ribosomal subunit. The N-terminus interacts with L11 and the large rRNA to form the base of the stalk. The C-terminus forms an elongated spine to which L12 dimers bind in a sequential fashion forming a multimeric L10(L12)X complex.

Its function is as follows. Forms part of the ribosomal stalk, playing a central role in the interaction of the ribosome with GTP-bound translation factors. The polypeptide is Large ribosomal subunit protein uL10 (Caldanaerobacter subterraneus subsp. tengcongensis (strain DSM 15242 / JCM 11007 / NBRC 100824 / MB4) (Thermoanaerobacter tengcongensis)).